Consider the following 237-residue polypeptide: BTB/POZ domain-containing protein KCTD6 (237 aa).

Residues 12 to 81 (HPVTLNVGGH…LRTSELTLPV (70 aa)) form the BTB domain.

As to quaternary structure, homopentamer. May be part of a cullin-containing E3 ubiquitin-protein ligase complex.

Its pathway is protein modification; protein ubiquitination. In terms of biological role, probable substrate-specific adapter of a cullin-containing E3 ubiquitin-protein ligase complex mediating the ubiquitination and subsequent proteasomal degradation of target proteins. This Danio rerio (Zebrafish) protein is BTB/POZ domain-containing protein KCTD6 (kctd6).